Here is a 240-residue protein sequence, read N- to C-terminus: Ribonuclease PH (240 aa).

Residues R87 and G125–R127 each bind phosphate.

It belongs to the RNase PH family. Homohexameric ring arranged as a trimer of dimers.

It carries out the reaction tRNA(n+1) + phosphate = tRNA(n) + a ribonucleoside 5'-diphosphate. Phosphorolytic 3'-5' exoribonuclease that plays an important role in tRNA 3'-end maturation. Removes nucleotide residues following the 3'-CCA terminus of tRNAs; can also add nucleotides to the ends of RNA molecules by using nucleoside diphosphates as substrates, but this may not be physiologically important. Probably plays a role in initiation of 16S rRNA degradation (leading to ribosome degradation) during starvation. The protein is Ribonuclease PH of Pseudomonas fluorescens (strain ATCC BAA-477 / NRRL B-23932 / Pf-5).